Here is a 352-residue protein sequence, read N- to C-terminus: MIFHPRPSPIAAAMYQLRDLGVDAIILHGPSGCCFRTARLLELDGVRVFTSNIDENAIVFGASENLKKALDYAIEYLKKELKKERPMIGIVGTCASMIIGEDLWEFVDDDRAIIIPVEVHSGSGDNTIGAIKAMESALKLGIIDEKEFERQKFLLKKATEVEKKRGMAKKEYIKPTYDDDLNEAIKVLKDLKEKDGKIACVLNAKKETAYLFAHPLIVLNKYFNCVNIANLDINKGLPKIRRDAQNILRRFKADYITGGLDEYPITGERAVEILKDLDVDAIVVSGVPHALPIEEIDKDIIKIGISDGPRTYHPIKEIYDYAIVELDAHAKVLGKRDIVKSRFGEILDYALE.

Belongs to the NifD/NifK/NifE/NifN family. In terms of assembly, homodimer or monomer. The Ni-sirohydrochlorin a,c-diamide reductive cyclase complex is composed of a NifH homolog component CfbC and a NifD homolog component CfbD. Requires [4Fe-4S] cluster as cofactor.

The enzyme catalyses Ni-sirohydrochlorin a,c-diamide + 3 AH2 + ATP + H2O = 15,17(3)-seco-F430-17(3)-acid + 3 A + ADP + phosphate. Its function is as follows. Involved in the biosynthesis of the unique nickel-containing tetrapyrrole coenzyme F430, the prosthetic group of methyl-coenzyme M reductase (MCR), which plays a key role in methanogenesis and anaerobic methane oxidation. Catalyzes both the six-electron reduction of the tetrahydroporphyrin ring system and the gamma-lactamization of the c-acetamide side chain of Ni-sirohydrochlorin a,c-diamide to yield 15,17(3)-seco-F430-17(3)-acid (seco-F430), the last intermediate in the biosynthesis of the coenzyme F430. The chain is Ni-sirohydrochlorin a,c-diamide reductive cyclase complex, component CfbD from Methanocaldococcus jannaschii (strain ATCC 43067 / DSM 2661 / JAL-1 / JCM 10045 / NBRC 100440) (Methanococcus jannaschii).